A 66-amino-acid chain; its full sequence is UPF0337 protein BT9727_0908 (66 aa).

Residues 1 to 22 (MSENGLKEQITGKVEKTKGQVK) form a disordered region. The span at 13-22 (KVEKTKGQVK) shows a compositional bias: basic and acidic residues.

The protein belongs to the UPF0337 (CsbD) family.

The polypeptide is UPF0337 protein BT9727_0908 (Bacillus thuringiensis subsp. konkukian (strain 97-27)).